A 168-amino-acid polypeptide reads, in one-letter code: MRTQSLKPYHANYHSLTTNDSPTRVDAPTDSGLISEFVYSENQPVVTQLLLPLLQQLSKQSRWLLWLTPQQKLSRSWLKQSGLPINKVVQLRQINPLSTVEAMEKALLTGNYSVVLGWLPELTEDDRIRLRLAAKLGNAYGFVMRPLNDTKVGSGQCATLKIHSYLYH.

Positions 106 to 112 (ALLTGNY) are ftsZ binding. The segment at 161 to 168 (KIHSYLYH) is lon protease binding.

Belongs to the SulA family. In terms of assembly, interacts with FtsZ. In terms of processing, is rapidly cleaved and degraded by the Lon protease once DNA damage is repaired.

Functionally, component of the SOS system and an inhibitor of cell division. Accumulation of SulA causes rapid cessation of cell division and the appearance of long, non-septate filaments. In the presence of GTP, binds a polymerization-competent form of FtsZ in a 1:1 ratio, thus inhibiting FtsZ polymerization and therefore preventing it from participating in the assembly of the Z ring. This mechanism prevents the premature segregation of damaged DNA to daughter cells during cell division. The chain is Cell division inhibitor SulA from Yersinia pestis bv. Antiqua (strain Antiqua).